We begin with the raw amino-acid sequence, 132 residues long: Peptide methionine sulfoxide reductase MsrB (132 aa).

Positions 9-131 (DAQWRAELSP…NSASLSFHPK (123 aa)) constitute a MsrB domain. Zn(2+) contacts are provided by C48, C51, C97, and C100. Residue C120 is the Nucleophile of the active site.

This sequence belongs to the MsrB Met sulfoxide reductase family. Zn(2+) serves as cofactor.

The enzyme catalyses L-methionyl-[protein] + [thioredoxin]-disulfide + H2O = L-methionyl-(R)-S-oxide-[protein] + [thioredoxin]-dithiol. The polypeptide is Peptide methionine sulfoxide reductase MsrB (Thiobacillus denitrificans (strain ATCC 25259 / T1)).